The sequence spans 146 residues: uncharacterized protein (146 aa).

Residues I6–F26 traverse the membrane as a helical segment.

The protein localises to the membrane. This is an uncharacterized protein from Caenorhabditis elegans.